A 146-amino-acid chain; its full sequence is Hemoglobin subunit beta (146 aa).

Position 1 is an N-acetylvaline (V1). One can recognise a Globin domain in the interval 2–146 (HLTDAEKALV…VATALAHKYH (145 aa)). T12 bears the Phosphothreonine mark. At S44 the chain carries Phosphoserine. K59 carries the post-translational modification N6-acetyllysine. H63 contributes to the heme b binding site. Position 82 is an N6-acetyllysine (K82). H92 is a heme b binding site. The residue at position 93 (C93) is an S-nitrosocysteine. K144 is modified (N6-acetyllysine).

It belongs to the globin family. Heterotetramer of two alpha chains and two beta chains. Red blood cells.

Involved in oxygen transport from the lung to the various peripheral tissues. The polypeptide is Hemoglobin subunit beta (Peromyscus californicus (California mouse)).